An 82-amino-acid polypeptide reads, in one-letter code: CLAVATA3/ESR (CLE)-related protein 53 (82 aa).

The first 26 residues, 1–26 (MATSTNSREFLIFICVLTLLVVRSEA), serve as a signal peptide directing secretion. Pro74 and Pro77 each carry hydroxyproline. Residue Pro77 is glycosylated (O-linked (Ara...) hydroxyproline).

The protein belongs to the CLV3/ESR signal peptide family. Post-translationally, the O-glycosylation (arabinosylation) of the hydroxyproline Pro-77 enhances binding affinity of the CLE53p peptide for its receptor. As to expression, expressed in root vasculature.

The protein localises to the secreted. Its subcellular location is the extracellular space. Its function is as follows. Signaling peptide involved in the regulation of root colonization by arbuscular mycorrhizal (AM) fungi. Moves from root to shoot to function with the receptor kinase SUNN, in a signaling pathway that repress strigolactone biosynthetic genes and strigolactone content in the roots, and consequently reduces the promotion of further colonization by AM fungi. The sequence is that of CLAVATA3/ESR (CLE)-related protein 53 from Medicago truncatula (Barrel medic).